A 274-amino-acid chain; its full sequence is 2,3,4,5-tetrahydropyridine-2,6-dicarboxylate N-succinyltransferase (274 aa).

Substrate contacts are provided by Arg104 and Asp141.

The protein belongs to the transferase hexapeptide repeat family. As to quaternary structure, homotrimer.

It is found in the cytoplasm. The enzyme catalyses (S)-2,3,4,5-tetrahydrodipicolinate + succinyl-CoA + H2O = (S)-2-succinylamino-6-oxoheptanedioate + CoA. The protein operates within amino-acid biosynthesis; L-lysine biosynthesis via DAP pathway; LL-2,6-diaminopimelate from (S)-tetrahydrodipicolinate (succinylase route): step 1/3. The protein is 2,3,4,5-tetrahydropyridine-2,6-dicarboxylate N-succinyltransferase of Escherichia coli O127:H6 (strain E2348/69 / EPEC).